A 416-amino-acid chain; its full sequence is UDP-N-acetylmuramoylalanine--D-glutamate ligase (416 aa).

104-110 serves as a coordination point for ATP; sequence GSNGKST.

It belongs to the MurCDEF family.

It is found in the cytoplasm. It carries out the reaction UDP-N-acetyl-alpha-D-muramoyl-L-alanine + D-glutamate + ATP = UDP-N-acetyl-alpha-D-muramoyl-L-alanyl-D-glutamate + ADP + phosphate + H(+). The protein operates within cell wall biogenesis; peptidoglycan biosynthesis. In terms of biological role, cell wall formation. Catalyzes the addition of glutamate to the nucleotide precursor UDP-N-acetylmuramoyl-L-alanine (UMA). The sequence is that of UDP-N-acetylmuramoylalanine--D-glutamate ligase from Francisella tularensis subsp. mediasiatica (strain FSC147).